The primary structure comprises 1114 residues: TBC1 domain family member 8B (1114 aa).

GRAM domains follow at residues 145-212 (LKFE…EKTS) and 285-353 (EQFK…DKTD). Positions 399 to 411 (TEVAVSSDSTGPS) are enriched in polar residues. The segment at 399-420 (TEVAVSSDSTGPSENFEEQPLT) is disordered. Residues 486–673 (GIPETLRGEL…NVVDCFFYDG (188 aa)) enclose the Rab-GAP TBC domain. Residues 857 to 892 (NRDSLALWTFRLLDENSDCLINFKEFSSAIDIMYNG) form the EF-hand domain. 2 disordered regions span residues 938–957 (SKPADEKETESGRNSPEKGK) and 1032–1061 (LHSPASSASTARDSGPSEGNAESSVKKDLP). A compositionally biased stretch (basic and acidic residues) spans 940–957 (PADEKETESGRNSPEKGK).

As to quaternary structure, interacts (via domain Rab-GAP TBC) with RAB11B (in GTP-bound form).

The protein localises to the cytoplasm. Its subcellular location is the cytosol. Functionally, involved in vesicular recycling, probably as a RAB11B GTPase-activating protein. In Mus musculus (Mouse), this protein is TBC1 domain family member 8B (Tbc1d8b).